Reading from the N-terminus, the 845-residue chain is Protein translocase subunit SecA (845 aa).

Residues Q88, 106–110 (GEGKT), and D495 each bind ATP. Residues 804–838 (SNRANRPQKKAKRQPIVKPDKPGRNDPCPCGSGKK) are disordered. A compositionally biased stretch (basic residues) spans 809–818 (RPQKKAKRQP). Residues C831, C833, C842, and C843 each contribute to the Zn(2+) site.

This sequence belongs to the SecA family. As to quaternary structure, monomer and homodimer. Part of the essential Sec protein translocation apparatus which comprises SecA, SecYEG and auxiliary proteins SecDF. Other proteins may also be involved. Zn(2+) is required as a cofactor.

Its subcellular location is the cell inner membrane. The protein resides in the cytoplasm. It carries out the reaction ATP + H2O + cellular proteinSide 1 = ADP + phosphate + cellular proteinSide 2.. Part of the Sec protein translocase complex. Interacts with the SecYEG preprotein conducting channel. Has a central role in coupling the hydrolysis of ATP to the transfer of proteins into and across the cell membrane, serving as an ATP-driven molecular motor driving the stepwise translocation of polypeptide chains across the membrane. This is Protein translocase subunit SecA from Halothermothrix orenii (strain H 168 / OCM 544 / DSM 9562).